Reading from the N-terminus, the 185-residue chain is Capsid protein (185 aa).

Residues 135–185 form a disordered region; sequence PNAPILSTLPETTVVRRRDRGRSPRRRTPSPRRRRSQSPRRRRSQSRESQC. A compositionally biased stretch (basic residues) spans 149-178; the sequence is VRRRDRGRSPRRRTPSPRRRRSQSPRRRRS. 3 positions are modified to phosphoserine; by host: serine 157, serine 164, and serine 172. A 1; half-length repeat occupies 157–163; sequence SPRRRTP. Positions 157–179 are 3 X 8 AA repeats of S-P-R-R-R-[PR]-S-Q; it reads SPRRRTPSPRRRRSQSPRRRRSQ. The Bipartite nuclear localization signal motif lies at 160-177; it reads RRTPSPRRRRSQSPRRRR. 2 tandem repeats follow at residues 164 to 171 and 172 to 179. Positions 179–185 are RNA binding; the sequence is QSRESQC.

This sequence belongs to the orthohepadnavirus core antigen family. Homodimerizes, then multimerizes. Interacts with cytosol exposed regions of viral L glycoprotein present in the reticulum-to-Golgi compartment. Interacts with human FLNB. Phosphorylated form interacts with host importin alpha; this interaction depends on the exposure of the NLS, which itself depends upon genome maturation and/or phosphorylation of the capsid protein. Interacts with host NUP153. In terms of processing, phosphorylated by host SRPK1, SRPK2, and maybe protein kinase C or GAPDH. Phosphorylation is critical for pregenomic RNA packaging. Protein kinase C phosphorylation is stimulated by HBx protein and may play a role in transport of the viral genome to the nucleus at the late step during the viral replication cycle.

The protein resides in the virion. It localises to the host cytoplasm. Functionally, self assembles to form an icosahedral capsid. Most capsids appear to be large particles with an icosahedral symmetry of T=4 and consist of 240 copies of capsid protein, though a fraction forms smaller T=3 particles consisting of 180 capsid proteins. Entering capsids are transported along microtubules to the nucleus. Phosphorylation of the capsid is thought to induce exposure of nuclear localization signal in the C-terminal portion of the capsid protein that allows binding to the nuclear pore complex via the importin (karyopherin-) alpha and beta. Capsids are imported in intact form through the nuclear pore into the nuclear basket, where it probably binds NUP153. Only capsids that contain the mature viral genome can release the viral DNA and capsid protein into the nucleoplasm. Immature capsids get stuck in the basket. Capsids encapsulate the pre-genomic RNA and the P protein. Pre-genomic RNA is reverse-transcribed into DNA while the capsid is still in the cytoplasm. The capsid can then either be directed to the nucleus, providing more genomes for transcription, or bud through the endoplasmic reticulum to provide new virions. This is Capsid protein from Hepatitis B virus genotype A3 (isolate Cameroon/CMR711/1994) (HBV-A).